Reading from the N-terminus, the 488-residue chain is MKFKDLRDFVQQLEQRGELKRIQMPISPVLEMTEICDRTLRAKGPALLFEKPVGFDIPVLGNLFGTPERVAMGMGAEAVSELREIGKLLAFLKEPEPPKGLKDAWSKLPIFRKVIAMAPKVVKDAPCQEVVIEGDDVDLGMLPVQTCWPGDVAPLITWGLTVTKGPNKERQNLGIYRQQVIGRNKIIMRWLSHRGGALDFRDWCVKHPGEPYPVAVALGADPATILGAVTPVPDSLSEYAFAGLLRGSRTELIKCRGSNLQVPASAEIVLEGVIHPGEMADEGPYGDHTGYYNEVDSFPVLTVERITHRIKPIYHSTYTGRPPDEPAILGVALNEVFVPILQKQFPEIVDFYLPPEGCSYRMAVVTIKKQYPGHAKRVMLGVWSFLRQFMYTKFVIVTDDDINARDWNDVIWAITTRMDPKRDTVMIDNTPIDYLDFASPVSGLGSKMGLDATNKWPGETSREWGRAIVKDEATTRRVDEIWTQLGID.

A Mn(2+)-binding site is contributed by N172. Residues 175-177, 189-191, and 194-195 each bind prenylated FMN; these read IYR, RWL, and RG. E238 is a Mn(2+) binding site. Catalysis depends on D287, which acts as the Proton donor.

It belongs to the UbiD family. Homohexamer. It depends on prenylated FMN as a cofactor. Mn(2+) is required as a cofactor.

Its subcellular location is the cell membrane. The enzyme catalyses a 4-hydroxy-3-(all-trans-polyprenyl)benzoate + H(+) = a 2-(all-trans-polyprenyl)phenol + CO2. It participates in cofactor biosynthesis; ubiquinone biosynthesis. Functionally, catalyzes the decarboxylation of 3-octaprenyl-4-hydroxy benzoate to 2-octaprenylphenol, an intermediate step in ubiquinone biosynthesis. The chain is 3-octaprenyl-4-hydroxybenzoate carboxy-lyase from Pseudomonas syringae pv. syringae (strain B728a).